The sequence spans 79 residues: uncharacterized protein (79 aa).

The signal sequence occupies residues 1 to 33 (MRLSIRAIVLFALVWIGLLMSGYGVLVGSKVNA).

This is an uncharacterized protein from Salmonella paratyphi A (strain ATCC 9150 / SARB42).